The chain runs to 121 residues: ATP synthase epsilon chain (121 aa).

Belongs to the ATPase epsilon chain family. In terms of assembly, F-type ATPases have 2 components, CF(1) - the catalytic core - and CF(0) - the membrane proton channel. CF(1) has five subunits: alpha(3), beta(3), gamma(1), delta(1), epsilon(1). CF(0) has three main subunits: a, b and c.

The protein resides in the cell membrane. In terms of biological role, produces ATP from ADP in the presence of a proton gradient across the membrane. This Mycolicibacterium vanbaalenii (strain DSM 7251 / JCM 13017 / BCRC 16820 / KCTC 9966 / NRRL B-24157 / PYR-1) (Mycobacterium vanbaalenii) protein is ATP synthase epsilon chain.